A 261-amino-acid polypeptide reads, in one-letter code: Probable electron transfer flavoprotein subunit beta (261 aa).

Ser2 is modified (N-acetylserine).

It belongs to the ETF beta-subunit/FixA family. Heterodimer of an alpha and a beta subunit. Interacts with YFH1. FAD is required as a cofactor. AMP serves as cofactor.

It is found in the mitochondrion matrix. Functionally, the electron transfer flavoprotein serves as a specific electron acceptor for several dehydrogenases, including five acyl-CoA dehydrogenases, glutaryl-CoA and sarcosine dehydrogenase. It transfers the electrons to the main mitochondrial respiratory chain via ETF-ubiquinone oxidoreductase (ETF dehydrogenase). This Saccharomyces cerevisiae (strain ATCC 204508 / S288c) (Baker's yeast) protein is Probable electron transfer flavoprotein subunit beta (CIR1).